Consider the following 172-residue polypeptide: MSSYSYTVAETQTFSVTHARHMAAKVATDLRRMQRFYGYPSDADIEAYEEELVVFLKAGYLGEVSYGFQKNNNWIEPTLRYTAGDLLGSGTDDDPGKIRPGKDVSGASFYSFMTYSSKYLNATQSEKDTALKDLPFKRVGAQSPGINGYLENDKTYSAGGRSLTRTSVRNFV.

The required for binding to CdnC and to confer phage immunity stretch occupies residues 141–172; it reads AQSPGINGYLENDKTYSAGGRSLTRTSVRNFV.

This sequence belongs to the bacterial HORMA family. HORMA1 subfamily. In terms of assembly, forms complexes with CdnC with 1:1 and 2:2 stoichimetry, and a 1:1:6 CdnC:Cap7:Cap6 complex.

Its function is as follows. Sensor protein of a CBASS antivirus system. CBASS (cyclic oligonucleotide-based antiphage signaling system) provides immunity against bacteriophage. The CD-NTase protein synthesizes cyclic nucleotides in response to infection; these serve as specific second messenger signals. The signals activate a diverse range of effectors, leading to bacterial cell death and thus abortive phage infection. A type III-C(AAA) CBASS system. In terms of biological role, binds to a closure peptide (consensus His-Xaa-Xaa-Ile-Leu-Leu-Thr), which allows it to activate CdnC for second messenger synthesis. Protects E.coli strain JP313 against bacteriophage lambda cI- infection. When the cdnC-cap7-cap6-nucC operon is transformed into a susceptible strain it confers bacteriophage immunity. Mutations in the sensor (Cap7 also called HORMA) or effector proteins (CdnC, NucC) but not the disassembly protein (Cap6 also called Trip13) no longer confer immunity. The presence of the intact operon leads to culture collapse and cell death, which occurs before the phage has finished its replication cycle, thus protecting non-infected bacteria by aborting the phage infection and preventing its propagation. The polypeptide is CD-NTase-associated protein 7 (Escherichia coli (strain MS 115-1)).